The following is a 623-amino-acid chain: MSKVIGIDLGTTNSCVSVFERGESKVIPNKEGKNTTPSVVAFTDKGEILVGDVAKRQAVTNPEKTIYSIKRIMGLMSNEKNAEEAKARLPYHVVDRNGACAVEIAGKVYTPQEISAKILIKLKEDAEAYLGESVTDAVITVPAYFNDSQRKATKEAGTIAGLNVLRIINEPTAAALAYGLDKKEAEKILVYDLGGGTFDVTVLETGDNIVEVLATGGNAFLGGDDFDNKIIDWLVSEFKNETGIDLKGDIMALQRLKEAAENAKKELSSAQETEINLPFITADATGPKHLVKKLTRAKFEGMIDSLVGETITKINEVIKDAGLSKSDIKEVVMVGGSTRVPLVQEEVKKAFGKELNKSVNPDEVVAIGAAIQGAVIKGDVKDVLLLDVTPLSLGIETLGGVMTKIIEKGTTIPTKKSQVFSTAEDNQNAVTIMVLQGEREFARDNKSLGNFNLEGIPAAPRGVPQIEVEFDIDANGILTVSAKDKATGKAQNITISGSSGLSEDEINSMVKDAELHKEEDKKRKDAVEARNQADALVHQTEKSMSELGEKVPAEDRSNIEAALNDLKEVLKDENSSKEQIDAKVEALSKASHKLAEAMYKKDENAGANGGNKKDDDVIDAEVE.

T197 carries the post-translational modification Phosphothreonine; by autocatalysis. The interval 600-623 is disordered; sequence KKDENAGANGGNKKDDDVIDAEVE.

It belongs to the heat shock protein 70 family.

In terms of biological role, acts as a chaperone. The chain is Chaperone protein DnaK from Campylobacter concisus (strain 13826).